A 576-amino-acid polypeptide reads, in one-letter code: MIVLGWAVFLASRSLGQGLLLTLEEHIAHFLGTRGATTTMGNSCICRDDSGTDDSVDTQQQQAENSAVPTADTRSQPRDPVRPPRRGRGPHEPRRKKQNVDGLVLDTLAVIRTLVDNDQEPPYSMITLHEMAETDEGWLDVVQSLIRVIPLEDPLGPAVITLLLDECPLPTKDALQKLTEILNLNGEVACQDSGHPAKHRNTSAVLGCLAEKLAGPASIGLLSPGILEYLLQCLKLQSHPTVMLFALIALEKFAQTSENKLTISESSISDRLVTLESWANDPDYLKRQVGFCAQWSLDNLFLKEGRQLTYEKVNLSSIRAMLNSNDVSEYLKISPHGLEARCDASSFESVRCTFCVDAGVWYYEVTVVTSGVMQIGWATRDSKFLNHEGYGIGDDEYSCAYDGCRQLIWYNARSKPHIHPCWKEGDTVGFLLDLNEKQMIFFLNGNQLPPEKQVFSSTISGFFAAASFMSYQQCEFNFGAKPFKYPPSMKFSTFNDYAFLTAEEKIILPRHRRLALLKQVSIRENCCSLCCDEVADTQLKPCGHSDLCMDCALQLETCPLCRKEIVSRIRQISHIS.

The first 16 residues, 1–16 (MIVLGWAVFLASRSLG), serve as a signal peptide directing secretion. S50 carries the phosphoserine modification. The tract at residues 50 to 99 (SGTDDSVDTQQQQAENSAVPTADTRSQPRDPVRPPRRGRGPHEPRRKKQN) is disordered. The span at 57-68 (DTQQQQAENSAV) shows a compositional bias: polar residues. Residues 83 to 97 (PPRRGRGPHEPRRKK) are compositionally biased toward basic residues. The 184-residue stretch at 300–483 (LFLKEGRQLT…CEFNFGAKPF (184 aa)) folds into the B30.2/SPRY domain. N314 carries an N-linked (GlcNAc...) asparagine glycan. The RING-type zinc-finger motif lies at 527 to 562 (CSLCCDEVADTQLKPCGHSDLCMDCALQLETCPLCR).

It is found in the secreted. The chain is RING finger and SPRY domain-containing protein 1 (RSPRY1) from Macaca fascicularis (Crab-eating macaque).